A 352-amino-acid chain; its full sequence is Protein-glutamate methylesterase/protein-glutamine glutaminase (352 aa).

One can recognise a Response regulatory domain in the interval 5–122 (RAIVIDDSAF…SLDIRNVEDE (118 aa)). Asp56 bears the 4-aspartylphosphate mark. Residues 163–352 (RSIVSIGTST…IPSLIVKQLT (190 aa)) form the CheB-type methylesterase domain. Catalysis depends on residues Ser171, His198, and Asp294.

This sequence belongs to the CheB family. Post-translationally, phosphorylated by CheA. Phosphorylation of the N-terminal regulatory domain activates the methylesterase activity.

It localises to the cytoplasm. The enzyme catalyses [protein]-L-glutamate 5-O-methyl ester + H2O = L-glutamyl-[protein] + methanol + H(+). It carries out the reaction L-glutaminyl-[protein] + H2O = L-glutamyl-[protein] + NH4(+). In terms of biological role, involved in chemotaxis. Part of a chemotaxis signal transduction system that modulates chemotaxis in response to various stimuli. Catalyzes the demethylation of specific methylglutamate residues introduced into the chemoreceptors (methyl-accepting chemotaxis proteins or MCP) by CheR. Also mediates the irreversible deamidation of specific glutamine residues to glutamic acid. This is Protein-glutamate methylesterase/protein-glutamine glutaminase from Oceanobacillus iheyensis (strain DSM 14371 / CIP 107618 / JCM 11309 / KCTC 3954 / HTE831).